A 369-amino-acid chain; its full sequence is Flagellar P-ring protein (369 aa).

Residues 1–23 form the signal peptide; the sequence is MRIASFFTVLLTLLTLNITPASA.

Belongs to the FlgI family. As to quaternary structure, the basal body constitutes a major portion of the flagellar organelle and consists of four rings (L,P,S, and M) mounted on a central rod.

It is found in the periplasm. It localises to the bacterial flagellum basal body. Its function is as follows. Assembles around the rod to form the L-ring and probably protects the motor/basal body from shearing forces during rotation. The chain is Flagellar P-ring protein from Pectobacterium atrosepticum (strain SCRI 1043 / ATCC BAA-672) (Erwinia carotovora subsp. atroseptica).